We begin with the raw amino-acid sequence, 131 residues long: Phosphomevalonate dehydratase small subunit (131 aa).

Catalysis depends on serine 62, which acts as the Proton acceptor.

It belongs to the AcnX type II small subunit family. In terms of assembly, heterodimer composed of a large subunit (PMDh-L) and a small subunit (PMDh-S).

The catalysed reaction is (R)-5-phosphomevalonate = (2E)-3-methyl-5-phosphooxypent-2-enoate + H2O. It functions in the pathway isoprenoid biosynthesis; isopentenyl diphosphate biosynthesis via mevalonate pathway. Component of a hydro-lyase that catalyzes the dehydration of mevalonate 5-phosphate (MVA5P) to form trans-anhydromevalonate 5-phosphate (tAHMP). Involved in the archaeal mevalonate (MVA) pathway, which provides fundamental precursors for isoprenoid biosynthesis, such as isopentenyl diphosphate (IPP) and dimethylallyl diphosphate (DMAPP). The sequence is that of Phosphomevalonate dehydratase small subunit from Thermococcus gammatolerans (strain DSM 15229 / JCM 11827 / EJ3).